Consider the following 91-residue polypeptide: Putative regulatory protein Tlet_1629 (91 aa).

The protein belongs to the RemA family.

This Pseudothermotoga lettingae (strain ATCC BAA-301 / DSM 14385 / NBRC 107922 / TMO) (Thermotoga lettingae) protein is Putative regulatory protein Tlet_1629.